The primary structure comprises 93 residues: SH3 domain-binding glutamic acid-rich-like protein 3 (93 aa).

The residue at position 2 (serine 2) is an N-acetylserine. Residues 2–93 (SGLRVYSTSV…NTLQEFLKLA (92 aa)) enclose the Glutaredoxin domain. An O-linked (GalNAc...) threonine glycan is attached at threonine 9.

This sequence belongs to the SH3BGR family. Interacts with MYO1C (via its IQ motifs); the interaction is dependent on calcium and takes place at membrane ruffles. May be glycosylated. As to expression, expressed in heart, liver, lung, kidney, spleen, thymus, ovarian follicles, skeletal muscle, brain, lymph node and mammary epithelial and stromal cells (at protein level).

It is found in the cytoplasm. It localises to the cytosol. The protein localises to the cell projection. Its subcellular location is the ruffle membrane. The protein resides in the nucleus. Its function is as follows. Could act as a modulator of glutaredoxin biological activity. May play a role in cytoskeleton organization. The protein is SH3 domain-binding glutamic acid-rich-like protein 3 of Rattus norvegicus (Rat).